The following is a 248-amino-acid chain: Small ribosomal subunit protein uS3 (248 aa).

Residues 39-111 enclose the KH type-2 domain; it reads IRKYLNKVYK…EIVFNVVEVK (73 aa). Residues 222–248 are disordered; that stretch reads KPFEASAPRPQRRNRKEANNYVNAKKN.

Belongs to the universal ribosomal protein uS3 family. Part of the 30S ribosomal subunit. Forms a tight complex with proteins S10 and S14.

In terms of biological role, binds the lower part of the 30S subunit head. Binds mRNA in the 70S ribosome, positioning it for translation. This chain is Small ribosomal subunit protein uS3, found in Alteracholeplasma palmae (strain ATCC 49389 / J233) (Acholeplasma palmae).